A 532-amino-acid polypeptide reads, in one-letter code: Berberine bridge enzyme-like 18 (532 aa).

An N-terminal signal peptide occupies residues 1 to 29; that stretch reads MKFQSFFSSVLIFFTTSTLLLSIPHPVSA. 7 N-linked (GlcNAc...) asparagine glycosylation sites follow: Asn-30, Asn-33, Asn-46, Asn-59, Asn-147, Asn-169, and Asn-262. Cys-40 and Cys-102 form a disulfide bridge. An FAD-binding PCMH-type domain is found at 80–254; it reads DVPKPVLILT…LSWKIGLINV (175 aa). The 6-(S-cysteinyl)-8alpha-(pros-histidyl)-FAD (His-Cys) cross-link spans 117–179; sequence HDYEGLSYVT…RTLAFPAGVC (63 aa).

This sequence belongs to the oxygen-dependent FAD-linked oxidoreductase family. FAD is required as a cofactor. The FAD cofactor is bound via a bicovalent 6-S-cysteinyl, 8alpha-N1-histidyl FAD linkage.

Its subcellular location is the secreted. It localises to the cell wall. The sequence is that of Berberine bridge enzyme-like 18 from Arabidopsis thaliana (Mouse-ear cress).